Consider the following 487-residue polypeptide: Acetyl-coenzyme A carboxylase carboxyl transferase subunit beta, chloroplastic (487 aa).

In terms of domain architecture, CoA carboxyltransferase N-terminal spans 223-487 (LWIQCDNCYG…FFPLKKNEIK (265 aa)). Residues Cys-227, Cys-230, Cys-243, and Cys-246 each contribute to the Zn(2+) site. The C4-type zinc-finger motif lies at 227 to 246 (CDNCYGLMYKKVKMNVCEQC).

The protein belongs to the AccD/PCCB family. As to quaternary structure, acetyl-CoA carboxylase is a heterohexamer composed of biotin carboxyl carrier protein, biotin carboxylase and 2 subunits each of ACCase subunit alpha and ACCase plastid-coded subunit beta (accD). The cofactor is Zn(2+).

It is found in the plastid. The protein localises to the chloroplast stroma. The catalysed reaction is N(6)-carboxybiotinyl-L-lysyl-[protein] + acetyl-CoA = N(6)-biotinyl-L-lysyl-[protein] + malonyl-CoA. It functions in the pathway lipid metabolism; malonyl-CoA biosynthesis; malonyl-CoA from acetyl-CoA: step 1/1. Component of the acetyl coenzyme A carboxylase (ACC) complex. Biotin carboxylase (BC) catalyzes the carboxylation of biotin on its carrier protein (BCCP) and then the CO(2) group is transferred by the transcarboxylase to acetyl-CoA to form malonyl-CoA. In Lepidium virginicum (Virginia pepperweed), this protein is Acetyl-coenzyme A carboxylase carboxyl transferase subunit beta, chloroplastic.